Reading from the N-terminus, the 38-residue chain is MSLRPCLTPSSMQYSDIYIPTHSLTSTSTLAVIPYPAF.

This is an uncharacterized protein from Saccharomyces cerevisiae (strain ATCC 204508 / S288c) (Baker's yeast).